The chain runs to 394 residues: Ornithine aminotransferase 1 (394 aa).

Residue Lys252 is modified to N6-(pyridoxal phosphate)lysine.

This sequence belongs to the class-III pyridoxal-phosphate-dependent aminotransferase family. OAT subfamily. It depends on pyridoxal 5'-phosphate as a cofactor.

Its subcellular location is the cytoplasm. It carries out the reaction a 2-oxocarboxylate + L-ornithine = L-glutamate 5-semialdehyde + an L-alpha-amino acid. It functions in the pathway amino-acid biosynthesis; L-proline biosynthesis; L-glutamate 5-semialdehyde from L-ornithine: step 1/1. Its function is as follows. Catalyzes the interconversion of ornithine to glutamate semialdehyde. This Staphylococcus aureus (strain Mu50 / ATCC 700699) protein is Ornithine aminotransferase 1.